The primary structure comprises 165 residues: Phosphopantetheine adenylyltransferase (165 aa).

Substrate is bound at residue Thr-9. Residues 9 to 10 (TF) and His-17 each bind ATP. Substrate is bound by residues Lys-41, Leu-78, and Arg-92. ATP-binding positions include 93–95 (GLR), Glu-103, and 128–134 (HQAIASK).

It belongs to the bacterial CoaD family. In terms of assembly, homohexamer. The cofactor is Mg(2+).

The protein localises to the cytoplasm. It catalyses the reaction (R)-4'-phosphopantetheine + ATP + H(+) = 3'-dephospho-CoA + diphosphate. It participates in cofactor biosynthesis; coenzyme A biosynthesis; CoA from (R)-pantothenate: step 4/5. In terms of biological role, reversibly transfers an adenylyl group from ATP to 4'-phosphopantetheine, yielding dephospho-CoA (dPCoA) and pyrophosphate. This is Phosphopantetheine adenylyltransferase from Ruegeria sp. (strain TM1040) (Silicibacter sp.).